The sequence spans 650 residues: Threonine--tRNA ligase (650 aa).

The TGS domain maps to 1–61 (MIKITFPDGA…DEDGTLEIVM (61 aa)). Residues 242 to 540 (DHRKLGKELD…LIETYKGAFP (299 aa)) form a catalytic region. Residues Cys336, His387, and His517 each coordinate Zn(2+).

Belongs to the class-II aminoacyl-tRNA synthetase family. Homodimer. The cofactor is Zn(2+).

It is found in the cytoplasm. It carries out the reaction tRNA(Thr) + L-threonine + ATP = L-threonyl-tRNA(Thr) + AMP + diphosphate + H(+). In terms of biological role, catalyzes the attachment of threonine to tRNA(Thr) in a two-step reaction: L-threonine is first activated by ATP to form Thr-AMP and then transferred to the acceptor end of tRNA(Thr). Also edits incorrectly charged L-seryl-tRNA(Thr). The chain is Threonine--tRNA ligase from Streptococcus suis (strain 98HAH33).